The chain runs to 93 residues: Acylphosphatase (93 aa).

Residues 5–91 (RAHFLVKGFV…RGETTFRIRS (87 aa)) form the Acylphosphatase-like domain. Residues Arg-20 and Asn-38 contribute to the active site.

Belongs to the acylphosphatase family.

It carries out the reaction an acyl phosphate + H2O = a carboxylate + phosphate + H(+). The chain is Acylphosphatase (acyP) from Moorella thermoacetica (strain ATCC 39073 / JCM 9320).